Consider the following 595-residue polypeptide: 3-hydroxy-3-methylglutaryl-coenzyme A reductase 2 (595 aa).

Residue N35 is glycosylated (N-linked (GlcNAc...) asparagine). 2 helical membrane-spanning segments follow: residues 48-68 (LPLY…MYFL) and 92-112 (AIVS…IGFV). Residues 113-183 (QTFVSRGNND…SPLITPASSE (71 aa)) are linker. The N-linked (GlcNAc...) asparagine glycan is linked to N121. Positions 184–595 (EDEEIINSVV…KYNRSTKASS (412 aa)) are catalytic. The active-site Charge relay system is E278. An N-linked (GlcNAc...) asparagine glycan is attached at N342. K410 acts as the Charge relay system in catalysis. The N-linked (GlcNAc...) asparagine glycan is linked to N455. The Charge relay system role is filled by D486. The active-site Proton donor is H584. N588 carries an N-linked (GlcNAc...) asparagine glycan.

This sequence belongs to the HMG-CoA reductase family. Expressed in young flowers and in mature sepals and ovaries.

The protein resides in the endoplasmic reticulum membrane. The enzyme catalyses (R)-mevalonate + 2 NADP(+) + CoA = (3S)-3-hydroxy-3-methylglutaryl-CoA + 2 NADPH + 2 H(+). It participates in metabolic intermediate biosynthesis; (R)-mevalonate biosynthesis; (R)-mevalonate from acetyl-CoA: step 3/3. Its function is as follows. Catalyzes the synthesis of mevalonate. The specific precursor of all isoprenoid compounds present in plants. The chain is 3-hydroxy-3-methylglutaryl-coenzyme A reductase 2 (HMG2) from Solanum tuberosum (Potato).